The chain runs to 362 residues: Phosphoserine aminotransferase (362 aa).

Arg42 lines the L-glutamate pocket. Pyridoxal 5'-phosphate contacts are provided by Trp102, Thr154, Asp174, and Gln197. At Lys198 the chain carries N6-(pyridoxal phosphate)lysine. Pyridoxal 5'-phosphate is bound at residue 239–240; sequence NT.

Belongs to the class-V pyridoxal-phosphate-dependent aminotransferase family. SerC subfamily. As to quaternary structure, homodimer. Pyridoxal 5'-phosphate serves as cofactor.

The protein localises to the cytoplasm. The catalysed reaction is O-phospho-L-serine + 2-oxoglutarate = 3-phosphooxypyruvate + L-glutamate. The enzyme catalyses 4-(phosphooxy)-L-threonine + 2-oxoglutarate = (R)-3-hydroxy-2-oxo-4-phosphooxybutanoate + L-glutamate. Its pathway is amino-acid biosynthesis; L-serine biosynthesis; L-serine from 3-phospho-D-glycerate: step 2/3. It functions in the pathway cofactor biosynthesis; pyridoxine 5'-phosphate biosynthesis; pyridoxine 5'-phosphate from D-erythrose 4-phosphate: step 3/5. Functionally, catalyzes the reversible conversion of 3-phosphohydroxypyruvate to phosphoserine and of 3-hydroxy-2-oxo-4-phosphonooxybutanoate to phosphohydroxythreonine. The polypeptide is Phosphoserine aminotransferase (Haemophilus ducreyi (strain 35000HP / ATCC 700724)).